We begin with the raw amino-acid sequence, 461 residues long: Probable ribonuclease FAU-1 (461 aa).

Residues Gly89–Arg158 form the S1 motif domain.

It belongs to the FAU-1 family.

Its function is as follows. Probable RNase involved in rRNA stability through maturation and/or degradation of precursor rRNAs. Binds to RNA in loop regions with AU-rich sequences. In Natronomonas pharaonis (strain ATCC 35678 / DSM 2160 / CIP 103997 / JCM 8858 / NBRC 14720 / NCIMB 2260 / Gabara) (Halobacterium pharaonis), this protein is Probable ribonuclease FAU-1.